Consider the following 403-residue polypeptide: MSEKGRLFTSESVTEGHPDKICDAISDSVLDALLAADPRSRVAVETLVTTGQVHVVGEVTTSAKEAFADITNTVRARILEIGYDSSDKGFDGATCGVNIGIGAQSPDIAQGVDTAHEARVEGAADPLDSQGAGDQGLMFGYAINATPELMPLPIALAHRLSRRLTEVRKNGVLPYLRPDGKTQVTIAYEDNVPVRLDTVVISTQHAADIDLEKTLDPDIREKVLNTVLDDLAHETLDASTVRVLVNPTGKFVLGGPMGDAGLTGRKIIVDTYGGWARHGGGAFSGKDPSKVDRSAAYAMRWVAKNVVAAGLAERVEVQVAYAIGKAAPVGLFVETFGTETEDPVKIEKAIGEVFDLRPGAIIRDLNLLRPIYAPTAAYGHFGRTDVELPWEQLDKVDDLKRAI.

His17 serves as a coordination point for ATP. Mg(2+) is bound at residue Asp19. Glu45 is a binding site for K(+). Glu58 and Gln104 together coordinate L-methionine. Residues 104–114 form a flexible loop region; it reads QSPDIAQGVDT. Residues 179 to 181, 250 to 251, Asp259, 265 to 266, Ala282, and Lys286 each bind ATP; these read DGK, KF, and RK. Asp259 is a binding site for L-methionine. Lys290 contacts L-methionine.

Belongs to the AdoMet synthase family. As to quaternary structure, homotetramer; dimer of dimers. Requires Mg(2+) as cofactor. K(+) serves as cofactor.

It is found in the cytoplasm. The catalysed reaction is L-methionine + ATP + H2O = S-adenosyl-L-methionine + phosphate + diphosphate. It participates in amino-acid biosynthesis; S-adenosyl-L-methionine biosynthesis; S-adenosyl-L-methionine from L-methionine: step 1/1. In terms of biological role, catalyzes the formation of S-adenosylmethionine (AdoMet) from methionine and ATP. The overall synthetic reaction is composed of two sequential steps, AdoMet formation and the subsequent tripolyphosphate hydrolysis which occurs prior to release of AdoMet from the enzyme. This is S-adenosylmethionine synthase from Mycobacterium tuberculosis (strain ATCC 25177 / H37Ra).